Consider the following 649-residue polypeptide: Acetyl-coenzyme A synthetase (649 aa).

Residues 191–194 (RGGR), Thr312, and Asn336 each bind CoA. Residues 388–390 (GEP), 412–417 (DTWWQT), Asp501, and Arg516 each bind ATP. A CoA-binding site is contributed by Ser524. Arg527 contacts ATP. Mg(2+)-binding residues include Val538, His540, and Val543. Arg585 contacts CoA. Lys610 is modified (N6-acetyllysine).

This sequence belongs to the ATP-dependent AMP-binding enzyme family. Mg(2+) is required as a cofactor. Acetylated. Deacetylation by the SIR2-homolog deacetylase activates the enzyme.

It carries out the reaction acetate + ATP + CoA = acetyl-CoA + AMP + diphosphate. Catalyzes the conversion of acetate into acetyl-CoA (AcCoA), an essential intermediate at the junction of anabolic and catabolic pathways. AcsA undergoes a two-step reaction. In the first half reaction, AcsA combines acetate with ATP to form acetyl-adenylate (AcAMP) intermediate. In the second half reaction, it can then transfer the acetyl group from AcAMP to the sulfhydryl group of CoA, forming the product AcCoA. In Marinobacter nauticus (strain ATCC 700491 / DSM 11845 / VT8) (Marinobacter aquaeolei), this protein is Acetyl-coenzyme A synthetase.